Reading from the N-terminus, the 169-residue chain is Crossover junction endodeoxyribonuclease RuvC (169 aa).

Active-site residues include D11, E71, and D143. Residues D11, E71, and D143 each contribute to the Mg(2+) site.

The protein belongs to the RuvC family. In terms of assembly, homodimer which binds Holliday junction (HJ) DNA. The HJ becomes 2-fold symmetrical on binding to RuvC with unstacked arms; it has a different conformation from HJ DNA in complex with RuvA. In the full resolvosome a probable DNA-RuvA(4)-RuvB(12)-RuvC(2) complex forms which resolves the HJ. Mg(2+) is required as a cofactor.

The protein localises to the cytoplasm. It carries out the reaction Endonucleolytic cleavage at a junction such as a reciprocal single-stranded crossover between two homologous DNA duplexes (Holliday junction).. Its function is as follows. The RuvA-RuvB-RuvC complex processes Holliday junction (HJ) DNA during genetic recombination and DNA repair. Endonuclease that resolves HJ intermediates. Cleaves cruciform DNA by making single-stranded nicks across the HJ at symmetrical positions within the homologous arms, yielding a 5'-phosphate and a 3'-hydroxyl group; requires a central core of homology in the junction. The consensus cleavage sequence is 5'-(A/T)TT(C/G)-3'. Cleavage occurs on the 3'-side of the TT dinucleotide at the point of strand exchange. HJ branch migration catalyzed by RuvA-RuvB allows RuvC to scan DNA until it finds its consensus sequence, where it cleaves and resolves the cruciform DNA. The sequence is that of Crossover junction endodeoxyribonuclease RuvC from Bartonella quintana (strain Toulouse) (Rochalimaea quintana).